Reading from the N-terminus, the 842-residue chain is Leucine--tRNA ligase (842 aa).

The short motif at 44-55 (PYPSANGLHVGH) is the 'HIGH' region element. Residues 619-623 (KMSKS) carry the 'KMSKS' region motif. Lys-622 contacts ATP.

Belongs to the class-I aminoacyl-tRNA synthetase family.

The protein resides in the cytoplasm. The catalysed reaction is tRNA(Leu) + L-leucine + ATP = L-leucyl-tRNA(Leu) + AMP + diphosphate. This chain is Leucine--tRNA ligase, found in Borrelia turicatae (strain 91E135).